Here is a 121-residue protein sequence, read N- to C-terminus: Protein p14.5 (121 aa).

Alanine 2 carries the post-translational modification N-acetylalanine; by host. Residues 84-121 (SLVPDEADNKPEDDEESGGAKPKKKKHLFPKLSSHKSK) are disordered. Positions 104–121 (KPKKKKHLFPKLSSHKSK) are enriched in basic residues.

It belongs to the asfivirus structural protein p14.5 family. In terms of assembly, interacts with the major capsid protein. Interacts with host IRF3; this interaction interferes with the recruitment of IRF3 to TBK1. In terms of processing, acetylated.

Its subcellular location is the virion. Structural protein required for transport of intracellular particles from the assembly sites to the plasma membrane. Binds to both ssDNA and dsDNA. Suppressed the activation of the cGAS/STING pathway by interfering with the recruitment of IRF3 to TBK1, which in turn suppresses IRF3 phosphorylation, decreasing interferon production. The sequence is that of Protein p14.5 from African swine fever virus (isolate Pig/Kenya/KEN-50/1950) (ASFV).